Here is a 47-residue protein sequence, read N- to C-terminus: Photosystem II reaction center protein K (47 aa).

Positions 1–10 (MAVYTLDLLA) are excised as a propeptide. Residues 19–39 (FGPLIDILPIIPLFFLLLAFV) form a helical membrane-spanning segment.

Belongs to the PsbK family. As to quaternary structure, PSII is composed of 1 copy each of membrane proteins PsbA, PsbB, PsbC, PsbD, PsbE, PsbF, PsbH, PsbI, PsbJ, PsbK, PsbL, PsbM, PsbT, PsbX, PsbY, PsbZ, Psb30/Ycf12, peripheral proteins PsbO, CyanoQ (PsbQ), PsbU, PsbV and a large number of cofactors. It forms dimeric complexes.

It is found in the cellular thylakoid membrane. One of the components of the core complex of photosystem II (PSII). PSII is a light-driven water:plastoquinone oxidoreductase that uses light energy to abstract electrons from H(2)O, generating O(2) and a proton gradient subsequently used for ATP formation. It consists of a core antenna complex that captures photons, and an electron transfer chain that converts photonic excitation into a charge separation. The chain is Photosystem II reaction center protein K from Synechococcus sp. (strain CC9311).